We begin with the raw amino-acid sequence, 98 residues long: Beta-elicitin DRE-beta (98 aa).

Cystine bridges form between Cys-3–Cys-71, Cys-27–Cys-56, and Cys-51–Cys-95.

Belongs to the elicitin family.

It localises to the secreted. Induces local and distal defense responses (incompatible hypersensitive reaction) in plants from the solanaceae and cruciferae families. Elicits leaf necrosis and causes the accumulation of pathogenesis-related proteins. Might interact with the lipidic molecules of the plasma membrane. This Phytophthora drechsleri protein is Beta-elicitin DRE-beta.